Reading from the N-terminus, the 840-residue chain is Cullin-4 (840 aa).

Over residues 1–11 the composition is skewed to polar residues; sequence MTSGAPPTIST. Residues 1–82 are disordered; the sequence is MTSGAPPTIS…TGNSSRTTAT (82 aa). The span at 33-48 shows a compositional bias: basic and acidic residues; the sequence is TEAKQMRGDTENRSDG. Polar residues predominate over residues 69–82; it reads FRSQTGNSSRTTAT. In terms of domain architecture, Cullin neddylation spans 772–831; that stretch reads DRQYKIDAAVVRIMKARKQLNHQTLMTELLQQLRFPVSTADIKKRLESLIEREYISRDPE. Residue K786 forms a Glycyl lysine isopeptide (Lys-Gly) (interchain with G-Cter in NEDD8) linkage.

This sequence belongs to the cullin family. As to quaternary structure, part of an E3 ubiquitin-protein ligase complex including cul-4 and ddb-1. In terms of processing, neddylated. Deneddylated via its interaction with the COP9 signalosome (CSN) complex.

Its pathway is protein modification; protein ubiquitination. Its function is as follows. Component of cullin-based E3 ubiquitin-protein ligase complexes which mediate the ubiquitination and subsequent proteasomal degradation of target proteins. The functional specificity of the E3 ubiquitin-protein ligase complex depends on the variable substrate recognition component. In association with ddb-1 directs ubiquitination of cdt-1 during S phase and is required for restraining DNA rereplication. Probably is involved in ubiquitination of cki-1. The polypeptide is Cullin-4 (cul-4) (Caenorhabditis elegans).